A 340-amino-acid chain; its full sequence is Delta-aminolevulinic acid dehydratase (340 aa).

3 residues coordinate Zn(2+): cysteine 134, cysteine 136, and cysteine 144. Lysine 211 acts as the Schiff-base intermediate with substrate in catalysis. 2 residues coordinate 5-aminolevulinate: arginine 221 and arginine 233. Residue lysine 264 is the Schiff-base intermediate with substrate of the active site. 5-aminolevulinate contacts are provided by serine 291 and tyrosine 330.

Belongs to the ALAD family. As to quaternary structure, homooctamer. The cofactor is Zn(2+).

It catalyses the reaction 2 5-aminolevulinate = porphobilinogen + 2 H2O + H(+). It participates in porphyrin-containing compound metabolism; protoporphyrin-IX biosynthesis; coproporphyrinogen-III from 5-aminolevulinate: step 1/4. In terms of biological role, catalyzes an early step in the biosynthesis of tetrapyrroles. Binds two molecules of 5-aminolevulinate per subunit, each at a distinct site, and catalyzes their condensation to form porphobilinogen. This is Delta-aminolevulinic acid dehydratase (HEM2) from Eremothecium gossypii (strain ATCC 10895 / CBS 109.51 / FGSC 9923 / NRRL Y-1056) (Yeast).